A 122-amino-acid polypeptide reads, in one-letter code: Large ribosomal subunit protein uL14 (122 aa).

This sequence belongs to the universal ribosomal protein uL14 family. Part of the 50S ribosomal subunit. Forms a cluster with proteins L3 and L19. In the 70S ribosome, L14 and L19 interact and together make contacts with the 16S rRNA in bridges B5 and B8.

In terms of biological role, binds to 23S rRNA. Forms part of two intersubunit bridges in the 70S ribosome. In Shewanella frigidimarina (strain NCIMB 400), this protein is Large ribosomal subunit protein uL14.